The sequence spans 660 residues: Galactocerebrosidase (660 aa).

The N-terminal stretch at 1 to 18 (MQTHNFLCIISVILGCSA) is a signal peptide. Positions 87 and 129 each coordinate substrate. An N-linked (GlcNAc...) asparagine glycan is attached at N147. Substrate is bound at residue N175. E176 functions as the Proton donor/acceptor in the catalytic mechanism. Residue E251 is the Nucleophile of the active site. Cysteines 264 and 371 form a disulfide. N-linked (GlcNAc...) asparagine glycosylation is found at N293 and N356. Residue R373 participates in substrate binding. N-linked (GlcNAc...) asparagine glycans are attached at residues N413, N465, N495, N499, N537, and N578.

Belongs to the glycosyl hydrolase 59 family.

It localises to the lysosome. The catalysed reaction is a beta-D-galactosyl-(1&lt;-&gt;1')-N-acylsphing-4-enine + H2O = an N-acylsphing-4-enine + D-galactose. The enzyme catalyses beta-D-galactosyl-(1&lt;-&gt;1)-sphing-4-enine + H2O = sphing-4-enine + D-galactose. It catalyses the reaction a D-galactosylceramide + H2O = an N-acyl-sphingoid base + D-galactose. In terms of biological role, hydrolyzes the galactose ester bonds of glycolipids such as galactosylceramide and galactosylsphingosine. This chain is Galactocerebrosidase, found in Danio rerio (Zebrafish).